Here is a 306-residue protein sequence, read N- to C-terminus: Homeobox protein HMX3 (306 aa).

The tract at residues 95–181 (HTPRTEVPDK…DKKPCRKKKT (87 aa)) is disordered. 2 stretches are compositionally biased toward basic and acidic residues: residues 117–143 (GERDSPDPIHPLKTELGAKESESKSPE) and 153–174 (EEGKKDDSGEDWKKREDSPDKK). The homeobox DNA-binding region spans 178 to 237 (KKKTRTVFSRSQVFQLESTFDMKRYLSSSERAGLAASLHLTETQVKIWFQNRRNKWKRQL).

Belongs to the HMX homeobox family.

It localises to the nucleus. Its function is as follows. Transcription factor involved in specification of neuronal cell types and which is required for inner ear and hypothalamus development. Binds to the 5'-CAAGTG-3' core sequence. May act as a stage-specific inhibitor of anf1 in the anterior neural plate during the development. In Xenopus laevis (African clawed frog), this protein is Homeobox protein HMX3 (hmx3).